We begin with the raw amino-acid sequence, 664 residues long: SPARC-like protein 1 (664 aa).

The first 16 residues, 1–16 (MKTGLFFLCLLGTAAA), serve as a signal peptide directing secretion. Residues 25–34 (SDHSKPTAET) are O-glycosylated at one additional site. The interval 28–360 (SKPTAETVAP…DGPRHSASDD (333 aa)) is disordered. O-linked (GalNAc...) threonine glycans are attached at residues threonine 31 and threonine 40. The O-linked (GalNAc...) serine glycan is linked to serine 44. The span at 62–84 (DDSHHKAEKSSVLKSKEESHEQS) shows a compositional bias: basic and acidic residues. 3 positions are modified to phosphoserine: serine 76, serine 84, and serine 92. Polar residues predominate over residues 85–94 (AEQGKSSSQE). Residues 96–105 (GLKDQEDSDG) show a composition bias toward basic and acidic residues. Residue threonine 116 is glycosylated (O-linked (GalNAc...) threonine). Over residues 120–136 (LDIKEDMSEPQEKKLSE) the composition is skewed to basic and acidic residues. The segment covering 146 to 156 (SSFTDSNQQES) has biased composition (polar residues). Residue asparagine 169 is glycosylated (N-linked (GlcNAc...) asparagine). Over residues 170-180 (YSHHQLNRSSK) the composition is skewed to basic residues. A Phosphoserine modification is found at serine 171. N-linked (GlcNAc...) asparagine glycans are attached at residues asparagine 176 and asparagine 196. A compositionally biased stretch (polar residues) spans 188–199 (QGNQEQDPNISN). Residues 216–235 (DNQERKTELPREHANSKQEE) are compositionally biased toward basic and acidic residues. 2 stretches are compositionally biased toward acidic residues: residues 236-248 (DNTQ…EESD) and 259-280 (DEFD…EEEN). Serine 272 bears the Phosphoserine mark. Residue asparagine 280 is glycosylated (N-linked (GlcNAc...) asparagine). Residues 306–316 (SNHKETEEKTV) are compositionally biased toward basic and acidic residues. O-linked (GalNAc...) threonine glycosylation is present at threonine 331. Over residues 339-349 (DDGDDDGDDGG) the composition is skewed to acidic residues. Serine 358 and serine 365 each carry phosphoserine. The interval 388 to 426 (EKVHENENIGTTEPGEHQEAKKAENSSNEEETSSEGNMR) is disordered. Threonine 398 carries an O-linked (GalNAc...) threonine glycan. The segment covering 401–411 (PGEHQEAKKAE) has biased composition (basic and acidic residues). N-linked (GlcNAc...) asparagine glycosylation is present at asparagine 412. At serine 420 the chain carries Phosphoserine. The Follistatin-like domain occupies 432 to 454 (SCMSFQCKRGHICKADQQGKPHC). 7 disulfide bridges follow: cysteine 433–cysteine 444, cysteine 438–cysteine 454, cysteine 456–cysteine 490, cysteine 462–cysteine 483, cysteine 472–cysteine 509, cysteine 515–cysteine 626, and cysteine 634–cysteine 650. The Kazal-like domain occupies 450–511 (GKPHCVCQDP…QLDYFGACKS (62 aa)). Asparagine 476 carries N-linked (GlcNAc...) asparagine glycosylation. The EF-hand domain maps to 622 to 657 (PMEHCITRFFEECDPNKDKHITLKEWGHCFGIKEED). Aspartate 635, asparagine 637, aspartate 639, histidine 641, and glutamate 646 together coordinate Ca(2+).

The protein belongs to the SPARC family. N- and O-glycosylated. O-glycosylated with a core 1 or possibly core 8 glycan. As to expression, highly expressed in lymph node, brain, heart, lung, skeletal muscle, ovary, small intestine, and colon, with lower levels in placenta, pancreas, testis, spleen, and thymus, and no expression in kidney, liver, and peripheral blood leukocytes.

It localises to the secreted. The protein localises to the extracellular space. Its subcellular location is the extracellular matrix. This Homo sapiens (Human) protein is SPARC-like protein 1 (SPARCL1).